A 207-amino-acid polypeptide reads, in one-letter code: Outer-membrane lipoprotein LolB (207 aa).

The N-terminal stretch at 1–21 is a signal peptide; it reads MTLPDFRLIRLLPLASLVLTA. A lipid anchor (N-palmitoyl cysteine) is attached at cysteine 22. Residue cysteine 22 is the site of S-diacylglycerol cysteine attachment.

The protein belongs to the LolB family. In terms of assembly, monomer.

Its subcellular location is the cell outer membrane. Plays a critical role in the incorporation of lipoproteins in the outer membrane after they are released by the LolA protein. In Salmonella schwarzengrund (strain CVM19633), this protein is Outer-membrane lipoprotein LolB.